Reading from the N-terminus, the 159-residue chain is Cyclic pyranopterin monophosphate synthase (159 aa).

Substrate is bound by residues 75 to 77 and 113 to 114; these read LCH and ME. Asp128 is a catalytic residue.

This sequence belongs to the MoaC family. Homohexamer; trimer of dimers.

The enzyme catalyses (8S)-3',8-cyclo-7,8-dihydroguanosine 5'-triphosphate = cyclic pyranopterin phosphate + diphosphate. The protein operates within cofactor biosynthesis; molybdopterin biosynthesis. In terms of biological role, catalyzes the conversion of (8S)-3',8-cyclo-7,8-dihydroguanosine 5'-triphosphate to cyclic pyranopterin monophosphate (cPMP). This chain is Cyclic pyranopterin monophosphate synthase, found in Photorhabdus laumondii subsp. laumondii (strain DSM 15139 / CIP 105565 / TT01) (Photorhabdus luminescens subsp. laumondii).